We begin with the raw amino-acid sequence, 83 residues long: MKNKNMNPSRPRLLCLIVFLFLVIVLSKASRIHVERRRFSSKPSGENREFLPSQPTFPVVDAGEILPDKRKVKTGSNPLHNKR.

The first 29 residues, 1 to 29 (MKNKNMNPSRPRLLCLIVFLFLVIVLSKA), serve as a signal peptide directing secretion.

The protein belongs to the CLV3/ESR signal peptide family. Mostly expressed in roots, seedlings, leaves, flowers, stems and apex, and, to a lower extent, in siliques and pollen.

Its subcellular location is the secreted. The protein resides in the extracellular space. Its function is as follows. Extracellular signal peptide that regulates cell fate. Represses root apical meristem maintenance. Inhibits irreversibly root growth by reducing cell division rates in the root apical meristem. Regulates the transition of protophloem cells from proliferation to differentiation, thus impinging on postembryonic growth capacity of the root meristem; this signaling pathway requires CRN and CLV2. This is CLAVATA3/ESR (CLE)-related protein 20 from Arabidopsis thaliana (Mouse-ear cress).